The following is a 546-amino-acid chain: MATAQLATFKIPPVSNEPMLSYAPGSPERAGLQAALAEMQSQLPFEVPCIINGQEVRTNNIQKQPMPHDHARHLCTFHEGSPELVEKATCGALQAKDGWETMPWNDRAAIFLKAADLASGKYRYKLMAATMLGQGKNTWQAEIDAAAELADFFRFGVSYVEELYAQQPPKNAPGCWNRTEYRPLEGFVLAVSPFNFTAIGGNLPGSPALVGNVVVWKPAPAATYSNYLVFKILSEAGVPPGVIQFIPGGAEIVQAAIQSPNFRSLHFTGSTNVFKSLWKDISSNLDKYKVYPRIVGETGGKNWHVIHKSAEVRNAVLQSVRGAFEYQGQKCSALSRLYVSRSVWENGFKTQYLEEIAKIKVGPCLDWNNYMGPVIGRRAYDNITGFIKKAKEEGGEVLIGGSGDDSKGFFIQPTVILTKVPRSTTMVGEIFGPVVTAYVFEDSDYEKTLELIDTTSIYGLTGAIFASERQALLTATNRSRNAAGNIYYNEKCTGAVVGQQPFGGARGSGTNDKAGSISIFYRFVSARSIKENFVGLEDFHYPSNLV.

279–284 (KDISSN) is a binding site for NAD(+). The active-site Proton acceptor is the Glu-297. Catalysis depends on Cys-331, which acts as the Nucleophile.

This sequence belongs to the aldehyde dehydrogenase family.

The protein resides in the cytoplasm. The catalysed reaction is L-glutamate 5-semialdehyde + NAD(+) + H2O = L-glutamate + NADH + 2 H(+). Its pathway is amino-acid degradation; L-proline degradation into L-glutamate; L-glutamate from L-proline: step 2/2. This chain is Delta-1-pyrroline-5-carboxylate dehydrogenase (pruA), found in Agaricus bisporus (White button mushroom).